Reading from the N-terminus, the 395-residue chain is S-adenosylmethionine synthase (395 aa).

Residue His-15 coordinates ATP. Mg(2+) is bound at residue Asp-17. Glu-43 is a binding site for K(+). 2 residues coordinate L-methionine: Glu-56 and Gln-99. The tract at residues 99–109 is flexible loop; that stretch reads QSPEIAQGVDR. ATP-binding positions include 164-166, 230-231, Asp-239, 245-246, Ala-262, and Lys-266; these read DAK, RF, and RK. Asp-239 serves as a coordination point for L-methionine. Residue Lys-270 participates in L-methionine binding.

It belongs to the AdoMet synthase family. Homotetramer; dimer of dimers. Requires Mg(2+) as cofactor. It depends on K(+) as a cofactor.

It is found in the cytoplasm. The enzyme catalyses L-methionine + ATP + H2O = S-adenosyl-L-methionine + phosphate + diphosphate. It participates in amino-acid biosynthesis; S-adenosyl-L-methionine biosynthesis; S-adenosyl-L-methionine from L-methionine: step 1/1. Functionally, catalyzes the formation of S-adenosylmethionine (AdoMet) from methionine and ATP. The overall synthetic reaction is composed of two sequential steps, AdoMet formation and the subsequent tripolyphosphate hydrolysis which occurs prior to release of AdoMet from the enzyme. The chain is S-adenosylmethionine synthase from Colwellia psychrerythraea (strain 34H / ATCC BAA-681) (Vibrio psychroerythus).